Consider the following 312-residue polypeptide: Pre-mRNA-splicing factor 38A (312 aa).

Positions 1-179 are N-terminal protein interaction domain; it reads MANRTVKDAH…VLEEAEQLEP (179 aa). S11, S193, S194, S209, and S226 each carry phosphoserine. A coiled-coil region spans residues 170–204; it reads VLEEAEQLEPRVSALEEDMDDVESSEEEEEEDEKL. Residues 181–312 are disordered; it reads VSALEEDMDD…SHKKSRRGNE (132 aa). Acidic residues predominate over residues 184–202; the sequence is LEEDMDDVESSEEEEEEDE. A compositionally biased stretch (basic and acidic residues) spans 203–224; it reads KLERVPSPDHRRRSYRDLDKPR. 2 stretches are compositionally biased toward basic residues: residues 225–294 and 301–312; these read RSPT…RSHS and KKSHKKSRRGNE.

It belongs to the PRP38 family. As to quaternary structure, component of the spliceosome B complex. Interacts (via N-terminal interaction domain) with ZMAT2 and MFAP1.

It localises to the nucleus. In terms of biological role, involved in pre-mRNA splicing as a component of the spliceosome. This Bos taurus (Bovine) protein is Pre-mRNA-splicing factor 38A (PRPF38A).